Here is a 418-residue protein sequence, read N- to C-terminus: Ig-like V-type domain-containing protein FAM187A (418 aa).

A signal peptide spans M1 to A18. The Extracellular segment spans residues F19–T376. In terms of domain architecture, Ig-like V-type spans P267–S361. C289 and C345 are joined by a disulfide. N317 is a glycosylation site (N-linked (GlcNAc...) asparagine). A helical membrane pass occupies residues A377–L397. At C398–L418 the chain is on the cytoplasmic side.

Belongs to the FAM187 family.

The protein resides in the membrane. The polypeptide is Ig-like V-type domain-containing protein FAM187A (Fam187a) (Rattus norvegicus (Rat)).